We begin with the raw amino-acid sequence, 423 residues long: 3-phosphoshikimate 1-carboxyvinyltransferase (423 aa).

Residues K21, S22, and R26 each contribute to the 3-phosphoshikimate site. K21 is a phosphoenolpyruvate binding site. 2 residues coordinate phosphoenolpyruvate: G93 and R123. 6 residues coordinate 3-phosphoshikimate: S168, S169, Q170, S196, D311, and K338. Q170 contributes to the phosphoenolpyruvate binding site. D311 (proton acceptor) is an active-site residue. 3 residues coordinate phosphoenolpyruvate: R342, R383, and K408.

Belongs to the EPSP synthase family. Monomer.

The protein resides in the cytoplasm. The enzyme catalyses 3-phosphoshikimate + phosphoenolpyruvate = 5-O-(1-carboxyvinyl)-3-phosphoshikimate + phosphate. Its pathway is metabolic intermediate biosynthesis; chorismate biosynthesis. In terms of biological role, catalyzes the transfer of the enolpyruvyl moiety of phosphoenolpyruvate (PEP) to the 5-hydroxyl of shikimate-3-phosphate (S3P) to produce enolpyruvyl shikimate-3-phosphate and inorganic phosphate. The chain is 3-phosphoshikimate 1-carboxyvinyltransferase from Methanosphaerula palustris (strain ATCC BAA-1556 / DSM 19958 / E1-9c).